Here is a 111-residue protein sequence, read N- to C-terminus: BET1-like protein (111 aa).

Over 1–86 (MADWTRAQSS…MARSGRDNRK (86 aa)) the chain is Cytoplasmic. Phosphoserine is present on residues serine 9 and serine 37. Positions 15–77 (DILDRENKRM…TGSVKRFSTM (63 aa)) constitute a t-SNARE coiled-coil homology domain. The chain crosses the membrane as a helical; Anchor for type IV membrane protein span at residues 87–107 (LLCGMAVVLIVAFFILSYLLS). Topologically, residues 108-111 (RTRT) are lumenal.

As to quaternary structure, component of a SNARE complex consisting of STX5, YKT6, GOSR1 and BET1L. Interacts with STX5.

The protein localises to the golgi apparatus membrane. The protein resides in the golgi apparatus. Its subcellular location is the trans-Golgi network membrane. Functionally, vesicle SNARE required for targeting and fusion of retrograde transport vesicles with the Golgi complex. Required for the integrity of the Golgi complex. The chain is BET1-like protein from Mus musculus (Mouse).